The sequence spans 143 residues: Large ribosomal subunit protein uL11 (143 aa).

It belongs to the universal ribosomal protein uL11 family. As to quaternary structure, part of the ribosomal stalk of the 50S ribosomal subunit. Interacts with L10 and the large rRNA to form the base of the stalk. L10 forms an elongated spine to which L12 dimers bind in a sequential fashion forming a multimeric L10(L12)X complex. Post-translationally, one or more lysine residues are methylated.

In terms of biological role, forms part of the ribosomal stalk which helps the ribosome interact with GTP-bound translation factors. This chain is Large ribosomal subunit protein uL11, found in Thioalkalivibrio sulfidiphilus (strain HL-EbGR7).